The chain runs to 244 residues: Protein TIFY 10b (244 aa).

Residues 97-132 (QEPEKRQLTIFYGGKVLVFNDFPADKAKGLMQLASK) enclose the Tify domain. A disordered region spans residues 174-244 (QKPARANASD…AVVKPIERGQ (71 aa)). Residues 185–210 (PIARKASLHRFLEKRKDRLNAKTPYQ) carry the Jas motif. The short motif at 187–194 (ARKASLHR) is the Nuclear localization signal element. The span at 194–204 (RFLEKRKDRLN) shows a compositional bias: basic and acidic residues.

It belongs to the TIFY/JAZ family. Interacts with BHLH148. Interacts with COI1A and COI1B in a coronatine-dependent manner. Coronatine is an analog of jasmonoyl isoleucine (JA-Ile). Ubiquitinated. Targeted for degradation by the SCF(COI1) E3 ubiquitin ligase-proteasome pathway during jasmonate signaling.

It localises to the nucleus. Repressor of jasmonate responses. This chain is Protein TIFY 10b, found in Oryza sativa subsp. japonica (Rice).